Reading from the N-terminus, the 630-residue chain is tRNA uridine 5-carboxymethylaminomethyl modification enzyme MnmG (630 aa).

FAD-binding positions include 14–19 (GAGHAG), Val-126, and Ser-181. Position 273 to 287 (273 to 287 (GPRYCPSIEDKVVRF)) interacts with NAD(+). Gln-370 contacts FAD.

It belongs to the MnmG family. In terms of assembly, homodimer. Heterotetramer of two MnmE and two MnmG subunits. FAD is required as a cofactor.

It is found in the cytoplasm. Functionally, NAD-binding protein involved in the addition of a carboxymethylaminomethyl (cmnm) group at the wobble position (U34) of certain tRNAs, forming tRNA-cmnm(5)s(2)U34. The sequence is that of tRNA uridine 5-carboxymethylaminomethyl modification enzyme MnmG from Alkaliphilus metalliredigens (strain QYMF).